Here is a 499-residue protein sequence, read N- to C-terminus: Cytochrome P450 81Q32 (499 aa).

The chain crosses the membrane as a helical span at residues 5–25 (TLLYTFLAVVLLSISLKLFPV). N-linked (GlcNAc...) asparagine glycans are attached at residues Asn112, Asn183, and Asn266. Cys434 lines the heme pocket.

Belongs to the cytochrome P450 family. In terms of tissue distribution, expressed in leaf epidermis and in the leaf internal phloem-associated parenchyma (IPAP) inside the mesophyll.

It is found in the membrane. In Catharanthus roseus (Madagascar periwinkle), this protein is Cytochrome P450 81Q32.